We begin with the raw amino-acid sequence, 304 residues long: MSLTVVSMACVGFFLLQGAWPHEGVHRKPSLLAHPGRLVKSEETVILQCWSDVMFEHFLLHREGMFNDTLRLIGEHHDGVSKANFSISRMKQDLAGTYRCYGSVTHSPYQLSAPSDPLDIVIIGLYEKPSLSAQPGPTVLAGENVTLSCSSRSSYDMYHLSREGEAHERRLPAGTKVNGTFQANFPLGPATHGGTYRCFGSFRDSPYEWSKSSDPLLVSVTGNPSNSWPSPTEPSSETGNPRHLHVLIGTSVVKIPFTILLFFLLHRWCSDKKNAAVMDQEPAGNRTVNSEDSDEQDHQEVSYA.

Residues 1-21 (MSLTVVSMACVGFFLLQGAWP) form the signal peptide. Residues 22 to 245 (HEGVHRKPSL…SETGNPRHLH (224 aa)) are Extracellular-facing. Ig-like C2-type domains follow at residues 42–107 (EETV…VTHS) and 142–205 (GENV…FRDS). Cysteines 49 and 100 form a disulfide. N-linked (GlcNAc...) asparagine glycans are attached at residues asparagine 67, asparagine 84, asparagine 144, and asparagine 178. Cysteine 149 and cysteine 198 form a disulfide bridge. Positions 220–239 (VTGNPSNSWPSPTEPSSETG) are disordered. The segment covering 223–239 (NPSNSWPSPTEPSSETG) has biased composition (low complexity). Residues 246-264 (VLIGTSVVKIPFTILLFFL) traverse the membrane as a helical segment. Topologically, residues 265 to 304 (LHRWCSDKKNAAVMDQEPAGNRTVNSEDSDEQDHQEVSYA) are cytoplasmic. Residues 280–304 (QEPAGNRTVNSEDSDEQDHQEVSYA) are disordered.

This sequence belongs to the immunoglobulin superfamily. As to quaternary structure, interacts with the adapter protein TYROBP/DAP12; the interaction enhances KIR2DS1 stability at the cell surface. In terms of tissue distribution, expressed by NK cells.

It localises to the cell membrane. Its function is as follows. Receptor on natural killer (NK) cells for some HLA-C alleles such as w6. Does not inhibit the activity of NK cells. The sequence is that of Killer cell immunoglobulin-like receptor 2DS1 from Homo sapiens (Human).